Consider the following 483-residue polypeptide: V-type proton ATPase subunit H (483 aa).

The residue at position 483 (Ser483) is a Phosphoserine.

The protein belongs to the V-ATPase H subunit family. As to quaternary structure, V-ATPase is a heteromultimeric enzyme made up of two complexes: the ATP-hydrolytic V1 complex and the proton translocation V0 complex. The V1 complex consists of three catalytic AB heterodimers that form a heterohexamer, three peripheral stalks each consisting of EG heterodimers, one central rotor including subunits D and F, and the regulatory subunits C and H. The proton translocation complex V0 consists of the proton transport subunit a, a ring of proteolipid subunits c9c'', rotary subunit d, subunits e and f, and the accessory subunits ATP6AP1/Ac45 and ATP6AP2/PRR. Interacts with AP2M1.

The protein resides in the cytoplasmic vesicle. The protein localises to the clathrin-coated vesicle membrane. Functionally, subunit of the V1 complex of vacuolar(H+)-ATPase (V-ATPase), a multisubunit enzyme composed of a peripheral complex (V1) that hydrolyzes ATP and a membrane integral complex (V0) that translocates protons. V-ATPase is responsible for acidifying and maintaining the pH of intracellular compartments and in some cell types, is targeted to the plasma membrane, where it is responsible for acidifying the extracellular environment. Subunit H is essential for V-ATPase activity, but not for the assembly of the complex. Involved in the endocytosis mediated by clathrin-coated pits, required for the formation of endosomes. The polypeptide is V-type proton ATPase subunit H (ATP6V1H) (Sus scrofa (Pig)).